Reading from the N-terminus, the 334-residue chain is Leucine-rich repeat-containing protein 39 (334 aa).

LRR repeat units lie at residues 59–82 (EDGRIILRIEKEEWKTLPSSLLKL), 83–105 (NQLQEWQLHRTGLLKIPEFIGRF), 106–128 (QHLIVLDLSRNTISEIPRGIGLL), 129–151 (TRLQELILSYNKIKTVPKELSNC), 153–175 (SLEKLELAVNRDISDLPTELSKL), 176–198 (LKLTHLDLSMNQFTTIPLAVLDM), 199–221 (PALEWLDMGSNSLQQLPDTLDRM), 223–244 (SLHTLWLQRNEITCLPETIRNM), 245–269 (KNLGTLVLSNNKLQDIPGCMEEMTS), and 272–295 (FVNFRDNPLRLEVTLPPSDDVDGE).

As to quaternary structure, interacts with MYH7 (via C-terminus). Expressed in heart and skeletal muscle (at protein level). Also detected in kidney (at protein level). Not detected in other tissues tested (at protein level).

The protein resides in the cytoplasm. It localises to the myofibril. The protein localises to the sarcomere. It is found in the m line. In terms of biological role, component of the sarcomeric M-band which plays a role in myocyte response to biomechanical stress. May regulate expression of other M-band proteins via an SRF-dependent pathway. Important for normal contractile function in heart. The protein is Leucine-rich repeat-containing protein 39 of Rattus norvegicus (Rat).